Here is a 194-residue protein sequence, read N- to C-terminus: UPF0215 protein Mbar_A0619 (194 aa).

This sequence belongs to the UPF0215 family.

This chain is UPF0215 protein Mbar_A0619, found in Methanosarcina barkeri (strain Fusaro / DSM 804).